The chain runs to 61 residues: MAKTSMVAKQQKKQKYAVREYTRCERCGRPHSVYRKFKLCRICFRELAYKGQIPGVRKASW.

Zn(2+) contacts are provided by cysteine 24, cysteine 27, cysteine 40, and cysteine 43.

It belongs to the universal ribosomal protein uS14 family. Zinc-binding uS14 subfamily. Part of the 30S ribosomal subunit. Contacts proteins S3 and S10. Zn(2+) is required as a cofactor.

Binds 16S rRNA, required for the assembly of 30S particles and may also be responsible for determining the conformation of the 16S rRNA at the A site. The protein is Small ribosomal subunit protein uS14 of Staphylococcus aureus (strain USA300 / TCH1516).